The primary structure comprises 417 residues: Gamma-glutamyl phosphate reductase (417 aa).

Belongs to the gamma-glutamyl phosphate reductase family.

The protein resides in the cytoplasm. The catalysed reaction is L-glutamate 5-semialdehyde + phosphate + NADP(+) = L-glutamyl 5-phosphate + NADPH + H(+). It functions in the pathway amino-acid biosynthesis; L-proline biosynthesis; L-glutamate 5-semialdehyde from L-glutamate: step 2/2. In terms of biological role, catalyzes the NADPH-dependent reduction of L-glutamate 5-phosphate into L-glutamate 5-semialdehyde and phosphate. The product spontaneously undergoes cyclization to form 1-pyrroline-5-carboxylate. The protein is Gamma-glutamyl phosphate reductase of Escherichia coli O45:K1 (strain S88 / ExPEC).